The chain runs to 168 residues: Endoribonuclease YbeY (168 aa).

Zn(2+)-binding residues include histidine 126, histidine 130, and histidine 136.

This sequence belongs to the endoribonuclease YbeY family. Requires Zn(2+) as cofactor.

Its subcellular location is the cytoplasm. Its function is as follows. Single strand-specific metallo-endoribonuclease involved in late-stage 70S ribosome quality control and in maturation of the 3' terminus of the 16S rRNA. The polypeptide is Endoribonuclease YbeY (Agrobacterium fabrum (strain C58 / ATCC 33970) (Agrobacterium tumefaciens (strain C58))).